The sequence spans 76 residues: Omega/Kappa-hexatoxin-Hv1h (76 aa).

The N-terminal stretch at 1-22 is a signal peptide; that stretch reads MNTATGFIVLLVLATILGGIEA. The propeptide occupies 23 to 35; it reads GESHMRKDAMGRV. Cystine bridges form between C40-C55, C47-C60, and C54-C74.

This sequence belongs to the neurotoxin 08 (Shiva) family. 02 (omega/kappa toxin) subfamily. Expressed by the venom gland.

It is found in the secreted. Functionally, toxin that may inhibit ion channels. The polypeptide is Omega/Kappa-hexatoxin-Hv1h (Hadronyche versuta (Blue mountains funnel-web spider)).